Consider the following 416-residue polypeptide: Enolase (416 aa).

Q160 lines the (2R)-2-phosphoglycerate pocket. E204 acts as the Proton donor in catalysis. Residues D239, E282, and D308 each contribute to the Mg(2+) site. 4 residues coordinate (2R)-2-phosphoglycerate: K333, R362, S363, and K384. Catalysis depends on K333, which acts as the Proton acceptor.

This sequence belongs to the enolase family. It depends on Mg(2+) as a cofactor.

It is found in the cytoplasm. Its subcellular location is the secreted. The protein localises to the cell surface. It carries out the reaction (2R)-2-phosphoglycerate = phosphoenolpyruvate + H2O. It functions in the pathway carbohydrate degradation; glycolysis; pyruvate from D-glyceraldehyde 3-phosphate: step 4/5. Catalyzes the reversible conversion of 2-phosphoglycerate (2-PG) into phosphoenolpyruvate (PEP). It is essential for the degradation of carbohydrates via glycolysis. In Metallosphaera sedula (strain ATCC 51363 / DSM 5348 / JCM 9185 / NBRC 15509 / TH2), this protein is Enolase.